The primary structure comprises 145 residues: Probable flagellum biosynthesis repressor protein FlbT (145 aa).

The protein belongs to the FlbT family.

Functionally, has a post-transcriptional repressor function in flagellum biogenesis. Associates with the 5'-UTR of fljK mRNA and promotes its degradation. In Chelativorans sp. (strain BNC1), this protein is Probable flagellum biosynthesis repressor protein FlbT.